Consider the following 393-residue polypeptide: Putative competence-damage inducible protein (393 aa).

It belongs to the CinA family.

In Streptococcus suis (strain 98HAH33), this protein is Putative competence-damage inducible protein.